A 715-amino-acid polypeptide reads, in one-letter code: Fatty acid oxidation complex subunit alpha (715 aa).

The interval 1–190 (MIYQGKAITV…KVGAVDAVVA (190 aa)) is enoyl-CoA hydratase/isomerase. Residue aspartate 297 participates in substrate binding. The tract at residues 312–715 (HDAKQAAVLG…MAKNGQRFFN (404 aa)) is 3-hydroxyacyl-CoA dehydrogenase. NAD(+) is bound by residues methionine 325, aspartate 344, 401-403 (VVE), lysine 408, and serine 430. Histidine 451 serves as the catalytic For 3-hydroxyacyl-CoA dehydrogenase activity. Asparagine 454 contributes to the NAD(+) binding site. Substrate is bound by residues asparagine 501 and tyrosine 660.

In the N-terminal section; belongs to the enoyl-CoA hydratase/isomerase family. It in the C-terminal section; belongs to the 3-hydroxyacyl-CoA dehydrogenase family. As to quaternary structure, heterotetramer of two alpha chains (FadB) and two beta chains (FadA).

It catalyses the reaction a (3S)-3-hydroxyacyl-CoA + NAD(+) = a 3-oxoacyl-CoA + NADH + H(+). It carries out the reaction a (3S)-3-hydroxyacyl-CoA = a (2E)-enoyl-CoA + H2O. The enzyme catalyses a 4-saturated-(3S)-3-hydroxyacyl-CoA = a (3E)-enoyl-CoA + H2O. The catalysed reaction is (3S)-3-hydroxybutanoyl-CoA = (3R)-3-hydroxybutanoyl-CoA. It catalyses the reaction a (3Z)-enoyl-CoA = a 4-saturated (2E)-enoyl-CoA. It carries out the reaction a (3E)-enoyl-CoA = a 4-saturated (2E)-enoyl-CoA. It functions in the pathway lipid metabolism; fatty acid beta-oxidation. Its function is as follows. Involved in the aerobic and anaerobic degradation of long-chain fatty acids via beta-oxidation cycle. Catalyzes the formation of 3-oxoacyl-CoA from enoyl-CoA via L-3-hydroxyacyl-CoA. It can also use D-3-hydroxyacyl-CoA and cis-3-enoyl-CoA as substrate. The chain is Fatty acid oxidation complex subunit alpha from Ectopseudomonas oleovorans (Pseudomonas oleovorans).